A 561-amino-acid polypeptide reads, in one-letter code: 4-coumarate--CoA ligase 1 (561 aa).

6 residues coordinate ATP: serine 210, serine 211, glycine 212, threonine 213, threonine 214, and lysine 218. Positions 260 and 264 each coordinate (E)-4-coumaroyl-AMP. Residue lysine 281 participates in CoA binding. The SBD1 stretch occupies residues 283–352 (EINLLLELIQ…AKFPNAKLGQ (70 aa)). Residues alanine 330, glutamine 352, glycine 353, threonine 357, and methionine 365 each coordinate (E)-4-coumaroyl-AMP. Residues glutamine 352, glycine 353, and threonine 357 each contribute to the ATP site. The tract at residues 353-420 (GYGMTEAGPV…IRGHQIMKGY (68 aa)) is SBD2. Residues aspartate 441 and arginine 456 each contribute to the ATP site. Positions 458 and 462 each coordinate (E)-4-coumaroyl-AMP. CoA is bound by residues lysine 464 and glycine 465. Lysine 547 provides a ligand contact to ATP.

It belongs to the ATP-dependent AMP-binding enzyme family. It depends on Mg(2+) as a cofactor. In terms of tissue distribution, preferentially expressed in roots, bolting stems and siliques. Also detected in leaves.

It carries out the reaction (E)-4-coumarate + ATP + CoA = (E)-4-coumaroyl-CoA + AMP + diphosphate. The enzyme catalyses (E)-caffeate + ATP + CoA = (E)-caffeoyl-CoA + AMP + diphosphate. The catalysed reaction is (E)-ferulate + ATP + CoA = (E)-feruloyl-CoA + AMP + diphosphate. It catalyses the reaction (E)-4-coumarate + ATP + H(+) = (E)-4-coumaroyl-AMP + diphosphate. It carries out the reaction (E)-4-coumaroyl-AMP + CoA = (E)-4-coumaroyl-CoA + AMP + H(+). The enzyme catalyses (E)-caffeate + ATP + H(+) = (E)-caffeoyl-AMP + diphosphate. The catalysed reaction is (E)-caffeoyl-AMP + CoA = (E)-caffeoyl-CoA + AMP + H(+). It catalyses the reaction (E)-ferulate + ATP + H(+) = (E)-feruloyl-AMP + diphosphate. It carries out the reaction (E)-feruloyl-AMP + CoA = (E)-feruloyl-CoA + AMP + H(+). It functions in the pathway phytoalexin biosynthesis; 3,4',5-trihydroxystilbene biosynthesis; 3,4',5-trihydroxystilbene from trans-4-coumarate: step 1/2. Its function is as follows. Produces CoA thioesters of a variety of hydroxy- and methoxy-substituted cinnamic acids, which are used to synthesize several phenylpropanoid-derived compounds, including anthocyanins, flavonoids, isoflavonoids, coumarins, lignin, suberin and wall-bound phenolics. Follows a two-step reaction mechanism, wherein the carboxylate substrate first undergoes adenylation by ATP, followed by a thioesterification in the presence of CoA to yield the final CoA thioesters. The sequence is that of 4-coumarate--CoA ligase 1 from Arabidopsis thaliana (Mouse-ear cress).